We begin with the raw amino-acid sequence, 229 residues long: Orotidine 5'-phosphate decarboxylase (229 aa).

Substrate contacts are provided by residues D10, K32, 59–68 (DLKFHDIPNT), T119, R180, Q189, G209, and R210. The active-site Proton donor is the K61.

This sequence belongs to the OMP decarboxylase family. Type 1 subfamily. As to quaternary structure, homodimer.

It carries out the reaction orotidine 5'-phosphate + H(+) = UMP + CO2. The protein operates within pyrimidine metabolism; UMP biosynthesis via de novo pathway; UMP from orotate: step 2/2. Its function is as follows. Catalyzes the decarboxylation of orotidine 5'-monophosphate (OMP) to uridine 5'-monophosphate (UMP). The polypeptide is Orotidine 5'-phosphate decarboxylase (Legionella pneumophila (strain Lens)).